The chain runs to 169 residues: MSVLQVLHFPDERLRITAQPVKEVNADIQRIVDDMFDTMYEEEGIGLAATQVDIHQRIIVIDVSEERDQRLVLINPELIEKSGDTGIEEGCLSIPETRALVPRAEHVKVRALDREGKAFELEASELLAICIQHEMDHLVGKLFIDYLSPLKRQRIRQKLEKLAKQNSRT.

Positions 91 and 133 each coordinate Fe cation. The active site involves Glu134. His137 contacts Fe cation.

Belongs to the polypeptide deformylase family. Requires Fe(2+) as cofactor.

The catalysed reaction is N-terminal N-formyl-L-methionyl-[peptide] + H2O = N-terminal L-methionyl-[peptide] + formate. In terms of biological role, removes the formyl group from the N-terminal Met of newly synthesized proteins. Requires at least a dipeptide for an efficient rate of reaction. N-terminal L-methionine is a prerequisite for activity but the enzyme has broad specificity at other positions. The chain is Peptide deformylase from Pectobacterium atrosepticum (strain SCRI 1043 / ATCC BAA-672) (Erwinia carotovora subsp. atroseptica).